Here is a 643-residue protein sequence, read N- to C-terminus: Hypoxia up-regulated protein 1 (643 aa).

Positions 1–22 (MRPLVCVFTMFLLALLSSNTES) are cleaved as a signal peptide. The segment at 565-643 (LGNTISSLFG…EEEKSEPQEE (79 aa)) is disordered. Over residues 590-610 (VQEEDEVPTEPTKEEEQESAD) the composition is skewed to acidic residues. Basic and acidic residues-rich tracts occupy residues 611–621 (AADKQKDKEKG) and 630–643 (EGKKEEEKSEPQEE).

The protein belongs to the heat shock protein 70 family.

The protein localises to the endoplasmic reticulum lumen. Has a pivotal role in cytoprotective cellular mechanisms triggered by oxygen deprivation. May play a role as a molecular chaperone and participate in protein folding. This Xenopus tropicalis (Western clawed frog) protein is Hypoxia up-regulated protein 1 (hyou1).